Reading from the N-terminus, the 93-residue chain is Ribonuclease P protein component 4 (93 aa).

Zn(2+) contacts are provided by Cys55, Cys58, Cys81, and Cys83.

This sequence belongs to the eukaryotic/archaeal RNase P protein component 4 family. As to quaternary structure, consists of a catalytic RNA component and at least 4-5 protein subunits. It depends on Zn(2+) as a cofactor.

It is found in the cytoplasm. It catalyses the reaction Endonucleolytic cleavage of RNA, removing 5'-extranucleotides from tRNA precursor.. Its function is as follows. Part of ribonuclease P, a protein complex that generates mature tRNA molecules by cleaving their 5'-ends. The sequence is that of Ribonuclease P protein component 4 from Halobacterium salinarum (strain ATCC 29341 / DSM 671 / R1).